Reading from the N-terminus, the 509-residue chain is Methionine--tRNA ligase (509 aa).

A 'HIGH' region motif is present at residues 12–22; that stretch reads YYVNDVPHIGH. The 'KMSKS' region motif lies at 295 to 299; sequence KISKS. K298 serves as a coordination point for ATP.

Belongs to the class-I aminoacyl-tRNA synthetase family. MetG type 2B subfamily. In terms of assembly, monomer.

The protein localises to the cytoplasm. The catalysed reaction is tRNA(Met) + L-methionine + ATP = L-methionyl-tRNA(Met) + AMP + diphosphate. Is required not only for elongation of protein synthesis but also for the initiation of all mRNA translation through initiator tRNA(fMet) aminoacylation. In Rickettsia bellii (strain RML369-C), this protein is Methionine--tRNA ligase.